The sequence spans 664 residues: Zinc finger protein 800 (664 aa).

The segment at Phe69–Tyr91 adopts a C2H2-type 1; degenerate zinc-finger fold. A Glycyl lysine isopeptide (Lys-Gly) (interchain with G-Cter in SUMO2) cross-link involves residue Lys132. Composition is skewed to polar residues over residues Ile154–Lys179 and Ser207–Ser224. Residues Ile154–Ser224 are disordered. A C2H2-type 2 zinc finger spans residues Leu230 to His253. Lys279 participates in a covalent cross-link: Glycyl lysine isopeptide (Lys-Gly) (interchain with G-Cter in SUMO2). Residues Arg287 to His310 form a C2H2-type 3 zinc finger. The residue at position 317 (Ser317) is a Phosphoserine. Residue Thr319 is modified to Phosphothreonine. A disordered region spans residues Gln328–Ser349. Ser336 bears the Phosphoserine mark. A compositionally biased stretch (basic residues) spans Lys339–Ser348. A C2H2-type 4 zinc finger spans residues Thr357–His382. The tract at residues Gly388–Lys476 is disordered. A Glycyl lysine isopeptide (Lys-Gly) (interchain with G-Cter in SUMO2) cross-link involves residue Lys392. Lys409 is covalently cross-linked (Glycyl lysine isopeptide (Lys-Gly) (interchain with G-Cter in SUMO1); alternate). Residue Lys409 forms a Glycyl lysine isopeptide (Lys-Gly) (interchain with G-Cter in SUMO2); alternate linkage. Residues Val416 to His436 show a composition bias toward polar residues. Ser422, Ser426, Ser455, Ser457, Ser460, and Ser462 each carry phosphoserine. Positions Pro458–Gln470 are enriched in polar residues. Residue Lys476 forms a Glycyl lysine isopeptide (Lys-Gly) (interchain with G-Cter in SUMO2) linkage. 2 C2H2-type zinc fingers span residues Leu486–His508 and Tyr519–His542. Disordered regions lie at residues Lys574 to Lys599 and His635 to Val664. A compositionally biased stretch (basic and acidic residues) spans Pro577 to Gly591. Lys599 participates in a covalent cross-link: Glycyl lysine isopeptide (Lys-Gly) (interchain with G-Cter in SUMO2). The C2H2-type 7 zinc-finger motif lies at His618–His640. The segment covering Thr653–Val664 has biased composition (basic residues).

Belongs to the krueppel C2H2-type zinc-finger protein family.

The protein resides in the nucleus. In terms of biological role, may be involved in transcriptional regulation. The sequence is that of Zinc finger protein 800 (ZNF800) from Homo sapiens (Human).